Consider the following 652-residue polypeptide: Probable protein phosphatase 2C 19 (652 aa).

Positions 265–517 (KYVVSSMQGW…DNTTVILVLF (253 aa)) constitute a PPM-type phosphatase domain. Mn(2+) contacts are provided by Asp300, Gly301, Glu467, and Asp508. Residues 524–567 (AVPPVDTDTDTDSHTGDDVDNNDPANEVDPTANAGSDDSNTSDE) form a disordered region.

The protein belongs to the PP2C family. Mg(2+) serves as cofactor. The cofactor is Mn(2+).

The enzyme catalyses O-phospho-L-seryl-[protein] + H2O = L-seryl-[protein] + phosphate. It catalyses the reaction O-phospho-L-threonyl-[protein] + H2O = L-threonyl-[protein] + phosphate. In Oryza sativa subsp. japonica (Rice), this protein is Probable protein phosphatase 2C 19.